Reading from the N-terminus, the 338-residue chain is Glyceraldehyde-3-phosphate dehydrogenase (338 aa).

NAD(+) contacts are provided by Arg-13, Ile-14, Asp-35, Arg-80, and Ser-123. D-glyceraldehyde 3-phosphate-binding residues include Ser-152, Cys-153, Thr-154, Thr-183, Arg-198, Thr-212, Gly-213, and Arg-235. Catalysis depends on Cys-153, which acts as the Nucleophile. Asn-317 contributes to the NAD(+) binding site.

The protein belongs to the glyceraldehyde-3-phosphate dehydrogenase family. In terms of assembly, homotetramer.

The protein resides in the tegument membrane. The catalysed reaction is D-glyceraldehyde 3-phosphate + phosphate + NAD(+) = (2R)-3-phospho-glyceroyl phosphate + NADH + H(+). It participates in carbohydrate degradation; glycolysis; pyruvate from D-glyceraldehyde 3-phosphate: step 1/5. Its function is as follows. This antigen is associated with human resistance to schistosomiasis. The chain is Glyceraldehyde-3-phosphate dehydrogenase from Schistosoma mansoni (Blood fluke).